The following is a 576-amino-acid chain: Alpha-1,3-arabinosyltransferase XAT3 (576 aa).

Topologically, residues 1–19 are cytoplasmic; it reads MKAGERPKLVRGVRQESRR. The helical; Signal-anchor for type II membrane protein transmembrane segment at 20–40 threads the bilayer; it reads FRLLVIVVGFFLVSLTFVFVS. The Lumenal portion of the chain corresponds to 41-576; the sequence is KPDAILFSLN…LLEALDNLNP (536 aa). A disordered region spans residues 64–171; sequence IQQKVNEPSG…KHKVTLPTVS (108 aa). Basic and acidic residues-rich tracts occupy residues 73-98, 126-138, and 147-163; these read GESR…DAKP, THNK…KSHQ, and GESK…EQKH. 3 N-linked (GlcNAc...) asparagine glycosylation sites follow: Asn172, Asn375, and Asn443.

It belongs to the glycosyltransferase 61 family.

Its subcellular location is the golgi apparatus membrane. The protein operates within glycan metabolism. Functionally, glycosyltransferase involved in the arabinosylation of xylan, the major hemicellulose (non-cellulosic component) of primary and secondary walls of angiosperms. Possesses alpha-1,3-arabinosyltransferase activity, transferring an arabinofuranose residue to the xylan backbone. This chain is Alpha-1,3-arabinosyltransferase XAT3, found in Oryza sativa subsp. japonica (Rice).